The chain runs to 306 residues: Glutathione transport system permease protein GsiC (306 aa).

The Cytoplasmic segment spans residues 1–8 (MLNYVIKR). Residues 9-29 (LLGLIPTLFIVSVLVFLFVHM) form a helical membrane-spanning segment. Topologically, residues 30–102 (LPGDPARLIA…SRFMPTLWLT (73 aa)) are periplasmic. An ABC transmembrane type-1 domain is found at 95-292 (FMPTLWLTIT…LEFILINLVV (198 aa)). A helical membrane pass occupies residues 103–123 (ITSMVWAVIFGMAAGIIAAVW). Topologically, residues 124 to 134 (RNRWPDRLSMT) are cytoplasmic. The helical transmembrane segment at 135–155 (IAVSGISFPAFALGMFLIQVF) threads the bilayer. Over 156–168 (SVELGWLPTVGAD) the chain is Periplasmic. The chain crosses the membrane as a helical span at residues 169-189 (SWQHYILPSLTLGAAVAAVMA). Residues 190–228 (RFTRASFVDVLSEDYMRTARAKGVSETWVVLKHGLRNAM) lie on the Cytoplasmic side of the membrane. The chain crosses the membrane as a helical span at residues 229-249 (IPVVTMMGLQFGFLLGGSIVV). The Periplasmic segment spans residues 250 to 277 (EKVFNWPGLGRLLVDSVEMRDYPVIQAE). A helical membrane pass occupies residues 278–298 (ILLFSLEFILINLVVDVLYAA). Residues 299 to 306 (INPAIRYK) lie on the Cytoplasmic side of the membrane.

It belongs to the binding-protein-dependent transport system permease family. As to quaternary structure, the complex is composed of two ATP-binding proteins (GsiA), two transmembrane proteins (GsiC and GsiD) and a solute-binding protein (GsiB).

Its subcellular location is the cell inner membrane. Part of the ABC transporter complex GsiABCD involved in glutathione import. Probably responsible for the translocation of the substrate across the membrane. This chain is Glutathione transport system permease protein GsiC, found in Shigella flexneri serotype 5b (strain 8401).